A 99-amino-acid chain; its full sequence is Integration host factor subunit alpha (99 aa).

Belongs to the bacterial histone-like protein family. As to quaternary structure, heterodimer of an alpha and a beta chain.

Its function is as follows. This protein is one of the two subunits of integration host factor, a specific DNA-binding protein that functions in genetic recombination as well as in transcriptional and translational control. The polypeptide is Integration host factor subunit alpha (Stenotrophomonas maltophilia (strain R551-3)).